A 363-amino-acid chain; its full sequence is 3-isopropylmalate dehydrogenase (363 aa).

78-91 contributes to the NAD(+) binding site; the sequence is GKKWDDLPINQRPE. Residues Arg-99, Arg-109, Arg-138, and Asp-227 each contribute to the substrate site. The Mg(2+) site is built by Asp-227, Asp-251, and Asp-255. 285–297 is an NAD(+) binding site; the sequence is GSAPDIEGKNIAN.

It belongs to the isocitrate and isopropylmalate dehydrogenases family. LeuB type 1 subfamily. In terms of assembly, homodimer. The cofactor is Mg(2+). Requires Mn(2+) as cofactor.

It localises to the cytoplasm. The enzyme catalyses (2R,3S)-3-isopropylmalate + NAD(+) = 4-methyl-2-oxopentanoate + CO2 + NADH. It functions in the pathway amino-acid biosynthesis; L-leucine biosynthesis; L-leucine from 3-methyl-2-oxobutanoate: step 3/4. Functionally, catalyzes the oxidation of 3-carboxy-2-hydroxy-4-methylpentanoate (3-isopropylmalate) to 3-carboxy-4-methyl-2-oxopentanoate. The product decarboxylates to 4-methyl-2 oxopentanoate. The polypeptide is 3-isopropylmalate dehydrogenase (Buchnera aphidicola subsp. Uroleucon rudbeckiae).